Reading from the N-terminus, the 1506-residue chain is Transcriptional repressor NF-X1 homolog (1506 aa).

The segment covering 1-12 has biased composition (polar residues); that stretch reads MEESQNIPPKTQ. Disordered regions lie at residues 1–123, 142–164, and 181–282; these read MEES…NNQL, LKSE…QEPT, and KAFV…KKDI. 2 stretches are compositionally biased toward low complexity: residues 13–103 and 110–121; these read TLNN…SNSN and HNNNYNNNNNNN. A compositionally biased stretch (low complexity) spans 194-209; that stretch reads NNTNNNNNNNNNNNNN. Residues 217-232 show a composition bias toward basic and acidic residues; that stretch reads DNNRPQRERRERKPKE. Positions 240–252 are enriched in pro residues; it reads PQQPQQPQQPQPQ. Positions 253–263 are enriched in low complexity; the sequence is PQQQQQSQQQQ. Residues 267–282 are compositionally biased toward basic and acidic residues; sequence ENNRKKENKLQSKKDI. The PHD-type zinc finger occupies 363-416; that stretch reads IYECMVCFENVGKNAVIWSCSQCFTMFHSSCIKQWSSKSVTTEGKWKCPGCRYN. An RING-type; degenerate zinc finger spans residues 366-414; the sequence is CMVCFENVGKNAVIWSCSQCFTMFHSSCIKQWSSKSVTTEGKWKCPGCR. 7 consecutive NF-X1-type zinc fingers follow at residues 460–478, 515–534, 581–600, 642–661, 739–758, 796–817, and 852–868; these read CPHS…NCSS, CGNH…PCEV, CGNH…PCSL, CKQH…SCKV, CGVH…NCYI, CGHS…PCTY, and CLSH…PCLI. Disordered stretches follow at residues 897 to 1012 and 1021 to 1040; these read QQSK…VDLN and NEEE…DEDE. Residues 903–921 show a composition bias toward low complexity; the sequence is TTTTTTTTTTSTTSTTSPK. The span at 925–934 shows a compositional bias: acidic residues; that stretch reads KDEELIEDDN. Residues 935–980 show a composition bias toward low complexity; it reads NNNNNNNNNNNNNNNNNNNNNNNNNNNNNNNNNNNNNNNNNNNNNN. Composition is skewed to basic and acidic residues over residues 981–1002 and 1021–1031; these read EKAE…HSDD and NEEEERIKKEE. The segment at 1062 to 1084 adopts an NF-X1-type 8 zinc-finger fold; the sequence is CEHTCHQACHPGEPCPTNISCKQ. 2 disordered regions span residues 1132–1167 and 1447–1473; these read SHTL…SSPT and NQNQ…IKPT. Low complexity-rich tracts occupy residues 1137 to 1167 and 1447 to 1470; these read NNPN…SSPT and NQNQ…NINI.

It belongs to the NFX1 family.

The protein resides in the nucleus. In terms of biological role, may play a role in transcription regulation. In Dictyostelium discoideum (Social amoeba), this protein is Transcriptional repressor NF-X1 homolog (nfx1).